Here is a 159-residue protein sequence, read N- to C-terminus: Histone H1 (159 aa).

3 disordered regions span residues 1 to 31 (MAEKESSKKVTTKKPAATHRRRDGCNSITEL), 80 to 99 (KGAECAGGQGTGVGEGKKEK), and 132 to 159 (AAKKVKAAPKKAKKPVKKTTEKKEKKKS). Positions 10–22 (VTTKKPAATHRRR) are enriched in basic residues. Residues 12 to 102 (TKKPAATHRR…GEGKKEKEKA (91 aa)) form the H15 domain. Residues 84 to 93 (CAGGQGTGVG) show a composition bias toward gly residues. Basic residues predominate over residues 134 to 148 (KKVKAAPKKAKKPVK). The segment covering 149–159 (KTTEKKEKKKS) has biased composition (basic and acidic residues).

The protein belongs to the histone H1/H5 family.

It is found in the nucleus. It localises to the chromosome. Functionally, histones H1 are necessary for the condensation of nucleosome chains into higher-order structures. The chain is Histone H1 from Psammechinus miliaris (Green sea urchin).